The sequence spans 675 residues: Protein brown (675 aa).

The Cytoplasmic segment spans residues 1–419 (MQESGGSSGQ…TEDLRNIRSG (419 aa)). The region spanning 34–261 (YSFWNECRKK…EVVAESHESL (228 aa)) is the ABC transporter domain. Residue 66 to 73 (GGSGAGKT) coordinates ATP. Residues 229–249 (EDSFETPSGESSASGSGSKSI) are disordered. Positions 236–248 (SGESSASGSGSKS) are enriched in low complexity. The helical transmembrane segment at 420-440 (LIAFGFFMITAVTLSLMYSGI) threads the bilayer. The Extracellular portion of the chain corresponds to 441-460 (GGLTQRTVQDVGGSIFMLSN). The helical transmembrane segment at 461 to 481 (EMIFTFSYGVTYIFPAALPII) threads the bilayer. At 482–497 (RREVGEGTYSLSAYYV) the chain is on the cytoplasmic side. The helical transmembrane segment at 498 to 518 (ALVLSFVPVAFFKGYVFLSVI) threads the bilayer. At 519 to 531 (YASIYYTRGFLLY) the chain is on the extracellular side. A helical membrane pass occupies residues 532–552 (LSMGFLMSLSAVAAVGYGVFL). Topologically, residues 553–568 (SSLFESDKMASECAAP) are cytoplasmic. Residues 569 to 589 (FDLIFLIFGGTYMNVDTVPGL) form a helical membrane-spanning segment. At 590-644 (KYLSLFFYSNEALMYKFWIDIDNIDCPVNEDHPCIKTGVEVLQQGSYRNADYTYW) the chain is on the extracellular side. Residues 645-665 (LDCFSLVVVAVIFHIVSFGLV) form a helical membrane-spanning segment. Topologically, residues 666–675 (RRYIHRSGYY) are cytoplasmic.

This sequence belongs to the ABC transporter superfamily. ABCG family. Eye pigment precursor importer (TC 3.A.1.204) subfamily. May form a heterodimer with w/white.

It is found in the membrane. It carries out the reaction guanine(out) + ATP + H2O = guanine(in) + ADP + phosphate + H(+). The enzyme catalyses riboflavin(in) + ATP + H2O = riboflavin(out) + ADP + phosphate + H(+). The catalysed reaction is (6S)-5,6,7,8-tetrahydrofolate(out) + ATP + H2O = (6S)-5,6,7,8-tetrahydrofolate(in) + ADP + phosphate + H(+). In terms of biological role, ATP-dependent transporter of the ATP-binding cassette (ABC) family which transports various molecules including bioamines, neurotransmitters and metabolic intermediates. In the eye and probably in association with w/white, required for the transport of the eye red pigment precursor, guanine, into pigment cell granules. In Malpighian tubules, involved in guanine uptake. Probably in association with w/white, involved in aging-induced intestinal stem cell proliferation in the midgut by regulating tetrahydrofolate transport. The chain is Protein brown from Drosophila melanogaster (Fruit fly).